Consider the following 438-residue polypeptide: 23S rRNA (uracil(1939)-C(5))-methyltransferase RlmD (438 aa).

One can recognise a TRAM domain in the interval 9 to 68 (RRTVNRHIITVTADNLDAQGQGVARHQGKTIFVAGLLPGEQAQVQLTEEKRQFAKAKLVK). Cys-81, Cys-87, Cys-90, and Cys-168 together coordinate [4Fe-4S] cluster. S-adenosyl-L-methionine is bound by residues Gln-272, Phe-301, Asn-306, Glu-322, Asn-349, and Asp-370. The Nucleophile role is filled by Cys-396.

The protein belongs to the class I-like SAM-binding methyltransferase superfamily. RNA M5U methyltransferase family. RlmD subfamily.

It carries out the reaction uridine(1939) in 23S rRNA + S-adenosyl-L-methionine = 5-methyluridine(1939) in 23S rRNA + S-adenosyl-L-homocysteine + H(+). Catalyzes the formation of 5-methyl-uridine at position 1939 (m5U1939) in 23S rRNA. The polypeptide is 23S rRNA (uracil(1939)-C(5))-methyltransferase RlmD (Photorhabdus laumondii subsp. laumondii (strain DSM 15139 / CIP 105565 / TT01) (Photorhabdus luminescens subsp. laumondii)).